The following is a 214-amino-acid chain: ATP-dependent Clp protease proteolytic subunit 2 (214 aa).

Residue S110 is the Nucleophile of the active site. H135 is an active-site residue.

The protein belongs to the peptidase S14 family. In terms of assembly, fourteen ClpP subunits assemble into 2 heptameric rings which stack back to back to give a disk-like structure with a central cavity, resembling the structure of eukaryotic proteasomes.

The protein resides in the cytoplasm. The enzyme catalyses Hydrolysis of proteins to small peptides in the presence of ATP and magnesium. alpha-casein is the usual test substrate. In the absence of ATP, only oligopeptides shorter than five residues are hydrolyzed (such as succinyl-Leu-Tyr-|-NHMec, and Leu-Tyr-Leu-|-Tyr-Trp, in which cleavage of the -Tyr-|-Leu- and -Tyr-|-Trp bonds also occurs).. Functionally, cleaves peptides in various proteins in a process that requires ATP hydrolysis. Has a chymotrypsin-like activity. Plays a major role in the degradation of misfolded proteins. This chain is ATP-dependent Clp protease proteolytic subunit 2, found in Mycobacterium leprae (strain TN).